Here is a 292-residue protein sequence, read N- to C-terminus: Nucleotide-binding protein azo0399 (292 aa).

8–15 (GLSGSGKS) lines the ATP pocket. 57–60 (DMRS) provides a ligand contact to GTP.

It belongs to the RapZ-like family.

In terms of biological role, displays ATPase and GTPase activities. The protein is Nucleotide-binding protein azo0399 of Azoarcus sp. (strain BH72).